The chain runs to 458 residues: tRNA modification GTPase MnmE (458 aa).

Residues R22, E86, and R125 each coordinate (6S)-5-formyl-5,6,7,8-tetrahydrofolate. The TrmE-type G domain maps to 221-379 (GIRTVILGRP…LEQTITEMFF (159 aa)). N231 is a K(+) binding site. Residues 231 to 236 (NAGKSS), 250 to 256 (TEIAGTT), and 275 to 278 (DTAG) each bind GTP. Position 235 (S235) interacts with Mg(2+). Residues T250, I252, and T255 each contribute to the K(+) site. A Mg(2+)-binding site is contributed by T256. Residue K458 coordinates (6S)-5-formyl-5,6,7,8-tetrahydrofolate.

This sequence belongs to the TRAFAC class TrmE-Era-EngA-EngB-Septin-like GTPase superfamily. TrmE GTPase family. As to quaternary structure, homodimer. Heterotetramer of two MnmE and two MnmG subunits. The cofactor is K(+).

Its subcellular location is the cytoplasm. Functionally, exhibits a very high intrinsic GTPase hydrolysis rate. Involved in the addition of a carboxymethylaminomethyl (cmnm) group at the wobble position (U34) of certain tRNAs, forming tRNA-cmnm(5)s(2)U34. The protein is tRNA modification GTPase MnmE of Lachnoclostridium phytofermentans (strain ATCC 700394 / DSM 18823 / ISDg) (Clostridium phytofermentans).